We begin with the raw amino-acid sequence, 288 residues long: Acetyl-coenzyme A carboxylase carboxyl transferase subunit beta (288 aa).

A CoA carboxyltransferase N-terminal domain is found at 34 to 288 (LFAKCPACKH…HLVAFHGGVS (255 aa)). Zn(2+) contacts are provided by C38, C41, C56, and C59. The C4-type zinc-finger motif lies at 38-59 (CPACKHMIYQKDLGPAKICPTC).

It belongs to the AccD/PCCB family. Acetyl-CoA carboxylase is a heterohexamer composed of biotin carboxyl carrier protein (AccB), biotin carboxylase (AccC) and two subunits each of ACCase subunit alpha (AccA) and ACCase subunit beta (AccD). The cofactor is Zn(2+).

The protein localises to the cytoplasm. The catalysed reaction is N(6)-carboxybiotinyl-L-lysyl-[protein] + acetyl-CoA = N(6)-biotinyl-L-lysyl-[protein] + malonyl-CoA. It participates in lipid metabolism; malonyl-CoA biosynthesis; malonyl-CoA from acetyl-CoA: step 1/1. In terms of biological role, component of the acetyl coenzyme A carboxylase (ACC) complex. Biotin carboxylase (BC) catalyzes the carboxylation of biotin on its carrier protein (BCCP) and then the CO(2) group is transferred by the transcarboxylase to acetyl-CoA to form malonyl-CoA. The protein is Acetyl-coenzyme A carboxylase carboxyl transferase subunit beta of Streptococcus equi subsp. zooepidemicus (strain MGCS10565).